We begin with the raw amino-acid sequence, 358 residues long: CCAAT/enhancer-binding protein alpha (358 aa).

Positions 1-55 are disordered; the sequence is MESADFYEAEPRPPMSSHLQSPPHAPSSAAFGFPRGAGPAQPPAPPAAPEPLGGI. Residues 1–70 are required to repress E2F1:TFDP1-mediated transcription, to inhibit cell cycle and to induce adipocyte differentiation; the sequence is MESADFYEAE…SIDISAYIDP (70 aa). Residues 29–39 are compositionally biased toward low complexity; sequence AAFGFPRGAGP. Positions 40–49 are enriched in pro residues; sequence AQPPAPPAAP. Residues 54–72 form a required for interaction with TRIB1 region; the sequence is GICEHETSIDISAYIDPAA. The tract at residues 128–204 is required to induce adipocyte differentiation; it reads PPGYGCAAAG…HPPPAHLAAP (77 aa). An N6-acetyllysine; alternate modification is found at Lys161. A Glycyl lysine isopeptide (Lys-Gly) (interchain with G-Cter in SUMO2); alternate cross-link involves residue Lys161. Disordered regions lie at residues 178 to 201 and 217 to 291; these read LFPYQPPPPPPPSHPHPHPPPAHL and TMHL…RRER. Composition is skewed to pro residues over residues 181-199 and 224-238; these read YQPPPPPPPSHPHPHPPPA and HPTPPPTPVPSPHPA. The required to functionally cooperate with SREBF1 in promoter activation stretch occupies residues 182-198; sequence QPPPPPPPSHPHPHPPP. Ser190 carries the phosphoserine modification. Phosphothreonine; by GSK3 occurs at positions 226 and 230. Ser234 carries the phosphoserine; by GSK3 modification. The segment covering 239–259 has biased composition (low complexity); that stretch reads PALGAAGLPGPGSALKGLGAA. Residues 244 to 358 form an interaction with FOXO1 region; that stretch reads AGLPGPGSAL…SLVKAMGNCA (115 aa). Over residues 276–291 the composition is skewed to basic and acidic residues; sequence KSVDKNSNEYRVRRER. Positions 282 to 345 constitute a bZIP domain; it reads SNEYRVRRER…DTLRGIFRQL (64 aa). Residues 285-300 mediate DNA binding; that stretch reads YRVRRERNNIAVRKSR. Residues 286–313 form a basic motif region; it reads RVRRERNNIAVRKSRDKAKQRNVETQQK. The interval 317–345 is leucine-zipper; the sequence is LTSDNDRLRKRVEQLSRELDTLRGIFRQL.

This sequence belongs to the bZIP family. C/EBP subfamily. Binds DNA as a homodimer and as a heterodimer. Can form stable heterodimers with CEBPB, CEBPD, CEBPE and CEBPG. Interacts with PRDM16. Interacts with UBN1. Interacts with ZNF638; this interaction increases transcriptional activation. Interacts with the complex TFDP2:E2F1; the interaction prevents CEBPA binding to target gene promoters and represses its transcriptional activity. Interacts with RB1. Interacts (when phosphorylated at Ser-190) with CDK2, CDK4, E2F4 and SMARCA2. Interacts with SREBPF1. Interacts with FOXO1 (via the Fork-head domain); the interaction increases when FOXO1 is deacetylated. Interacts with SIX1. Interacts (via recognition sequence) with TRIB1. Interacts (via bZIP domain) with OVOL2 (via zinc-finger domains); the interaction inhibits the transcription factor activity of CEBPA and is required to repress adipogenesis. In terms of assembly, interacts with TAF1A and UBTF. As to quaternary structure, interacts with TAF1A and UBTF. Interacts with NPM1. (Microbial infection) Interacts with HBV protein X. In terms of assembly, (Microbial infection) Interacts with Epstein-Barr virus lytic switch protein BZLF1; this interaction induces G1 cell cycle arrest. In terms of processing, phosphorylation at Ser-190 is required for interaction with CDK2, CDK4 and SWI/SNF complex leading to cell cycle inhibition. Dephosphorylated at Ser-190 by protein phosphatase 2A (PP2A) through PI3K/AKT signaling pathway regulation. Phosphorylation at Thr-226 and Thr-230 by GSK3 is constitutive in adipose tissue and lung. In liver, both Thr-226 and Thr-230 are phosphorylated only during feeding but not during fasting. Phosphorylation of the GSK3 consensus sites selectively decreases transactivation activity on IRE-controlled promoters. Post-translationally, sumoylated, sumoylation blocks the inhibitory effect on cell proliferation by disrupting the interaction with SMARCA2. Ubiquitinated by COP1 upon interaction with TRIB1.

The protein resides in the nucleus. It is found in the nucleolus. Its function is as follows. Transcription factor that coordinates proliferation arrest and the differentiation of myeloid progenitors, adipocytes, hepatocytes, and cells of the lung and the placenta. Binds directly to the consensus DNA sequence 5'-T[TG]NNGNAA[TG]-3' acting as an activator on distinct target genes. During early embryogenesis, plays essential and redundant functions with CEBPB. Essential for the transition from common myeloid progenitors (CMP) to granulocyte/monocyte progenitors (GMP). Critical for the proper development of the liver and the lung. Necessary for terminal adipocyte differentiation, is required for postnatal maintenance of systemic energy homeostasis and lipid storage. To regulate these different processes at the proper moment and tissue, interplays with other transcription factors and modulators. Down-regulates the expression of genes that maintain cells in an undifferentiated and proliferative state through E2F1 repression, which is critical for its ability to induce adipocyte and granulocyte terminal differentiation. Reciprocally E2F1 blocks adipocyte differentiation by binding to specific promoters and repressing CEBPA binding to its target gene promoters. Proliferation arrest also depends on a functional binding to SWI/SNF complex. In liver, regulates gluconeogenesis and lipogenesis through different mechanisms. To regulate gluconeogenesis, functionally cooperates with FOXO1 binding to IRE-controlled promoters and regulating the expression of target genes such as PCK1 or G6PC1. To modulate lipogenesis, interacts and transcriptionally synergizes with SREBF1 in promoter activation of specific lipogenic target genes such as ACAS2. In adipose tissue, seems to act as FOXO1 coactivator accessing to ADIPOQ promoter through FOXO1 binding sites. Functionally, can act as dominant-negative. Binds DNA and have transctivation activity, even if much less efficiently than isoform 2. Does not inhibit cell proliferation. Directly and specifically enhances ribosomal DNA transcription interacting with RNA polymerase I-specific cofactors and inducing histone acetylation. The chain is CCAAT/enhancer-binding protein alpha from Homo sapiens (Human).